Here is a 275-residue protein sequence, read N- to C-terminus: Vitamin B12-binding protein (275 aa).

A signal peptide spans 1-19; sequence MMNKICLYLPLFFSSLTMA. One can recognise a Fe/B12 periplasmic-binding domain in the interval 25–272; that stretch reads RVISLAPHAT…EVCEHFESVK (248 aa). C185 and C265 are disulfide-bonded.

It belongs to the BtuF family. In terms of assembly, the complex is composed of two ATP-binding proteins (BtuD), two transmembrane proteins (BtuC) and a solute-binding protein (BtuF).

The protein localises to the periplasm. Functionally, part of the ABC transporter complex BtuCDF involved in vitamin B12 import. Binds vitamin B12 and delivers it to the periplasmic surface of BtuC. The protein is Vitamin B12-binding protein of Vibrio parahaemolyticus serotype O3:K6 (strain RIMD 2210633).